We begin with the raw amino-acid sequence, 1063 residues long: Structural polyprotein (1063 aa).

Positions 23–131 (LRAELAAGAS…LGPPTNPFQA (109 aa)) are disordered. Residues 30–69 (GASQLRRPRPPRQRDSSTSGDDSGRDSGGPRRRRGNRGRG) are human C1QBP/SF2P32-binding. Position 46 is a phosphoserine; by host (Ser46). The span at 59–69 (PRRRRGNRGRG) shows a compositional bias: basic residues. Over residues 70 to 87 (QRKDWSKAPPPPEERQES) the composition is skewed to basic and acidic residues. A compositionally biased stretch (pro residues) spans 93 to 107 (APKPPRAPPQPPQPP). The cysteines at positions 153 and 197 are disulfide-linked. The segment at 279–300 (GAPQVFLAGLLLAAVAVGTARA) is functions as E2 signal peptide. Over 301–534 (GLQPRTDIAA…LWLATANALS (234 aa)) the chain is Extracellular. Positions 305 to 327 (RTDIAAPPAPPQAPRAHGKHYGH) are disordered. Asn353, Asn371, Asn410, and Asn429 each carry an N-linked (GlcNAc...) asparagine; by host glycan. Residues 535–555 (LDHALAAVVLLVPWVLIFMLC) traverse the membrane as a helical segment. At 556–582 (RRACRRRGAAAALTAVVLQGYNPPAYG) the chain is on the cytoplasmic side. The functions as E1 signal peptide stretch occupies residues 563–582 (GAAAALTAVVLQGYNPPAYG). The Extracellular segment spans residues 583–1028 (EEAFTYLCTA…QTWAEWAAAH (446 aa)). Disulfide bonds link Cys590/Cys595, Cys619/Cys824, Cys641/Cys653, Cys699/Cys712, Cys758/Cys767, Cys807/Cys817, Cys931/Cys934, and Cys950/Cys983. Residue Asn658 is glycosylated (N-linked (GlcNAc...) asparagine; by host). Ca(2+) is bound by residues Asn670 and Ala671. Residues Asp718 and Thr719 each contribute to the Ca(2+) site. Residues Asn759 and Asn791 are each glycosylated (N-linked (GlcNAc...) asparagine; by host). Residues Thr1011 and Thr1012 are each glycosylated (O-linked (GalNAc...) threonine; by host). A helical membrane pass occupies residues 1029–1049 (WWQLTLGAICALLLAGLLACC). Topologically, residues 1050-1063 (AKCLYYLRGAIAPR) are extracellular.

In terms of assembly, homodimer; further assembles into homooligomer. Interacts with human C1QBP. Interacts (via N-terminus) with protease/methyltransferase p150. As to quaternary structure, heterodimer with spike glycoprotein E2. Heterodimer with spike glycoprotein E1. In terms of processing, structural polyprotein: Specific enzymatic cleavages in vivo yield mature proteins. Two signal peptidase-mediated cleavages within the polyprotein produce the structural proteins capsid, E2, and E1. The E2 signal peptide remains attached to the C-terminus of the capsid protein after cleavage by the signal peptidase. Another signal peptide at E2 C-terminus directs E1 to the ER, with a similar mechanism. Post-translationally, contains three N-linked oligosaccharides. Capsid is phosphorylated on Ser-46 by host. This phosphorylation negatively regulates capsid protein RNA-binding activity. Dephosphorylated by human PP1A.

It localises to the virion. The protein localises to the host cytoplasm. It is found in the host mitochondrion. The protein resides in the virion membrane. Its subcellular location is the host Golgi apparatus membrane. Functionally, capsid protein interacts with genomic RNA and assembles into icosahedric core particles 65-70 nm in diameter. The resulting nucleocapsid eventually associates with the cytoplasmic domain of E2 at the cell membrane, leading to budding and formation of mature virions from host Golgi membranes. Phosphorylation negatively regulates RNA-binding activity, possibly delaying virion assembly during the viral replication phase. Capsid protein dimerizes and becomes disulfide-linked in the virion. Modulates genomic RNA replication. Modulates subgenomic RNA synthesis by interacting with human C1QBP/SF2P32. Induces both perinuclear clustering of mitochondria and the formation of electron-dense intermitochondrial plaques, both hallmarks of rubella virus infected cells. Induces apoptosis when expressed in transfected cells. Responsible for viral attachment to target host cell, by binding to the cell receptor. Its transport to the plasma membrane depends on interaction with E1 protein. The surface glycoproteins display an irregular helical organization and a pseudo-tetrameric inner nucleocapsid arrangement. Its function is as follows. Class II viral fusion protein. Fusion activity is inactive as long as E1 is bound to E2 in mature virion. After virus attachment to target cell and clathrin-mediated endocytosis, acidification of the endosome would induce dissociation of E1/E2 heterodimer and concomitant trimerization of the E1 subunits. This E1 homotrimer is fusion active, and promotes release of viral nucleocapsid in cytoplasm after endosome and viral membrane fusion. The cytoplasmic tail of spike glycoprotein E1 modulates virus release. The surface glycoproteins display an irregular helical organization and a pseudo-tetrameric inner nucleocapsid arrangement. In Rubella virus (strain BRD1) (RUBV), this protein is Structural polyprotein.